Consider the following 78-residue polypeptide: Acyl carrier protein (78 aa).

One can recognise a Carrier domain in the interval 2–77; that stretch reads STIEERVKKI…AAIDYILSHQ (76 aa). Ser37 is subject to O-(pantetheine 4'-phosphoryl)serine.

This sequence belongs to the acyl carrier protein (ACP) family. In terms of processing, 4'-phosphopantetheine is transferred from CoA to a specific serine of apo-ACP by AcpS. This modification is essential for activity because fatty acids are bound in thioester linkage to the sulfhydryl of the prosthetic group.

It is found in the cytoplasm. Its pathway is lipid metabolism; fatty acid biosynthesis. Functionally, carrier of the growing fatty acid chain in fatty acid biosynthesis. The polypeptide is Acyl carrier protein (Tolumonas auensis (strain DSM 9187 / NBRC 110442 / TA 4)).